The following is a 281-amino-acid chain: MILSLLSMNINYNSITSIKQILKERKIAPRKLWGQNYLINESIRQKIIESLDIKENEKIWEIGPGLGAMTDILLKKTNLLTAFEIDLKYSEILNEKFGKLKNFKLIKGDFLKKYPNENKNIDKIFSNLPYNIASKVISKLIEENFLKEMVLTVQKELADRITAKTNSKNYSSFTVLVQSHFTAIKIIDIGENNFYPAPKVKSTTLKLIPKKNNIKDFKEFNKLIRTVFSGRRKKLKNTIINFIKNKAILEENFLKEYLGKRPENISVEEFIQISNNLNAYH.

Residues Asn36, Leu38, Gly63, Glu84, Asp109, and Asn127 each contribute to the S-adenosyl-L-methionine site.

This sequence belongs to the class I-like SAM-binding methyltransferase superfamily. rRNA adenine N(6)-methyltransferase family. RsmA subfamily.

The protein resides in the cytoplasm. The enzyme catalyses adenosine(1518)/adenosine(1519) in 16S rRNA + 4 S-adenosyl-L-methionine = N(6)-dimethyladenosine(1518)/N(6)-dimethyladenosine(1519) in 16S rRNA + 4 S-adenosyl-L-homocysteine + 4 H(+). Functionally, specifically dimethylates two adjacent adenosines (A1518 and A1519) in the loop of a conserved hairpin near the 3'-end of 16S rRNA in the 30S particle. May play a critical role in biogenesis of 30S subunits. The sequence is that of Ribosomal RNA small subunit methyltransferase A from Borrelia garinii subsp. bavariensis (strain ATCC BAA-2496 / DSM 23469 / PBi) (Borreliella bavariensis).